A 105-amino-acid polypeptide reads, in one-letter code: UPF0145 protein Aflv_1588 (105 aa).

Belongs to the UPF0145 family.

This is UPF0145 protein Aflv_1588 from Anoxybacillus flavithermus (strain DSM 21510 / WK1).